A 168-amino-acid chain; its full sequence is Putative insulin-like growth factor 2 antisense gene protein (168 aa).

Disordered stretches follow at residues 1 to 91 and 108 to 168; these read MSKR…ERSN and PLRR…RPGK. Composition is skewed to basic residues over residues 59 to 70 and 159 to 168; these read AQRRRGSARRGA and RWRQPGRPGK.

The sequence is that of Putative insulin-like growth factor 2 antisense gene protein (IGF2-AS) from Homo sapiens (Human).